We begin with the raw amino-acid sequence, 436 residues long: MSDRQQVTNAKGERIAIVAGLRTPFAKQATAFHGVSALDMGKMVVNELLARSELDPKLIEQLVYGQVVQMPAAPNIAREIVLGTGMNVSTDAYSVTRACATSFQSTVNVAESIMTGNIDIGIAGGADSSSVLPIGVSKKLAHALVDLNKARSFGQKLQIFRRLGLKDLLPVPPAVAEYSTGLSMGQTAEQMAKTYNISRADQDALAHRSHTLASETWASGHLRDEVMVAHIPPYKQFIDRDNNIRENSVLESYAKLRPAFDKQHGTVTAANSTPLTDGASAIILMSEGRAKALGYQPIGYIKSYAFSAIDVWQDMLMGPSYATPLALKRAGMELEDLTLIEMHEAFAAQTLANMQMFASKKFAEEKLGRNRPIGEIDMSKFNVLGGSLAYGHPFAATGTRLITQVCRELKRRGGGTGLTTACAAGGLGVAMIVEVE.

Cys-99 functions as the Acyl-thioester intermediate in the catalytic mechanism. Residues His-392 and Cys-422 each act as proton acceptor in the active site.

The protein belongs to the thiolase-like superfamily. Thiolase family. In terms of assembly, heterotetramer of two alpha chains (FadJ) and two beta chains (FadI).

It localises to the cytoplasm. The enzyme catalyses an acyl-CoA + acetyl-CoA = a 3-oxoacyl-CoA + CoA. The protein operates within lipid metabolism; fatty acid beta-oxidation. Its function is as follows. Catalyzes the final step of fatty acid oxidation in which acetyl-CoA is released and the CoA ester of a fatty acid two carbons shorter is formed. This is 3-ketoacyl-CoA thiolase from Shewanella sp. (strain W3-18-1).